The chain runs to 177 residues: Transcription termination/antitermination protein NusG (177 aa).

Residues 125–150 (EGENVRITEGPFANFTAIVEEYDMVR) enclose the KOW domain.

This sequence belongs to the NusG family.

Its function is as follows. Participates in transcription elongation, termination and antitermination. In Campylobacter jejuni subsp. jejuni serotype O:2 (strain ATCC 700819 / NCTC 11168), this protein is Transcription termination/antitermination protein NusG.